A 410-amino-acid chain; its full sequence is MKDYSKIGDKLVMQRPRRRLEGTAMGATVFDLRPGVGIGPFSIGMPICEAFAQIEQQPNIYDVVHVKYYDEDPLKLDVVISFPDHGFHLRFDPWSQRLRLVEIFDVKRLQMRYATSMIGGPSTLATFVAVYALFGPTFPGIYDKERGIYSLFYPGLSFEFPIPNQYTDCCHDGEAALPLEFPDGTTPVTCRVSIYDNSSDKKVGVGKLMDRASVPPLPPGSLYMEEVHVKPGKELYFTVGGQHMPFGASPQDVWTELGRPCGIHPKQVDQMVIHSASDPRPKTTICGDYFYNYFTRGLDILFDGETHKVKKFVLHTNYPGHADFNSYIKCNFVISAGADAAEANRSGNKITPSTNWDQVKEILGECGPAAIQTQGSTSNPFGSTYVYGYQNVAFEVMKNGHIATITLFQS.

This sequence belongs to the PHAF1 family.

In Arabidopsis thaliana (Mouse-ear cress), this protein is PHAF1 protein At3g51130.